The chain runs to 636 residues: Chaperone protein HtpG (636 aa).

Positions 1–345 (MSESATANAN…SSDLPLNVSR (345 aa)) are a; substrate-binding. Positions 346 to 562 (EILQQSKDID…EHDPSGNLAR (217 aa)) are b. A c region spans residues 563-636 (LMKAAGQPMP…NDLMMALSAK (74 aa)).

This sequence belongs to the heat shock protein 90 family. In terms of assembly, homodimer.

It localises to the cytoplasm. Molecular chaperone. Has ATPase activity. This chain is Chaperone protein HtpG, found in Dechloromonas aromatica (strain RCB).